The sequence spans 213 residues: Thymidylate kinase (213 aa).

Residue 10 to 17 (GLEGAGKT) coordinates ATP.

This sequence belongs to the thymidylate kinase family.

It catalyses the reaction dTMP + ATP = dTDP + ADP. Its function is as follows. Phosphorylation of dTMP to form dTDP in both de novo and salvage pathways of dTTP synthesis. This chain is Thymidylate kinase, found in Salmonella dublin (strain CT_02021853).